We begin with the raw amino-acid sequence, 380 residues long: All-trans-retinol dehydrogenase [NAD(+)] ADH4 (380 aa).

Cys-47 provides a ligand contact to Zn(2+). 48–49 (HT) provides a ligand contact to NAD(+). Zn(2+)-binding residues include His-69, Cys-99, Cys-102, Cys-105, and Cys-113. Ser-121 carries the phosphoserine modification. A Zn(2+)-binding site is contributed by Cys-180. NAD(+) contacts are provided by residues 205–210 (GLGGVG), Asp-229, and Lys-234. Ser-278 is subject to Phosphoserine. Residues 298-300 (IGV), 323-325 (TFF), and Arg-375 each bind NAD(+).

This sequence belongs to the zinc-containing alcohol dehydrogenase family. Class-II subfamily. As to quaternary structure, homodimer. It depends on Zn(2+) as a cofactor.

The protein resides in the cytoplasm. The catalysed reaction is all-trans-retinol + NAD(+) = all-trans-retinal + NADH + H(+). It catalyses the reaction 9-cis-retinol + NAD(+) = 9-cis-retinal + NADH + H(+). The enzyme catalyses 20-oxo-(5Z,8Z,11Z,14Z)-eicosatetraenoate + NAD(+) + H2O = (5Z,8Z,11Z,14Z)-eicosatetraenedioate + NADH + 2 H(+). It carries out the reaction 20-hydroxy-(5Z,8Z,11Z,14Z)-eicosatetraenoate + NAD(+) = 20-oxo-(5Z,8Z,11Z,14Z)-eicosatetraenoate + NADH + H(+). The catalysed reaction is 1,4-benzoquinone + NADH + H(+) = hydroquinone + NAD(+). Oxydation of 20-HETE is inhibited by low concentrations of N-heptylformamide. Oxydation of 20-HETE is a decreased by 55-65% by either all-trans-retinol or all-trans-retinoic acid. Strongly inhibited by omega-hydroxy fatty acids. Functionally, catalyzes the NAD-dependent oxidation of either all-trans-retinol or 9-cis-retinol. Also oxidizes long chain omega-hydroxy fatty acids, such as 20-HETE, producing both the intermediate aldehyde, 20-oxoarachidonate and the end product, a dicarboxylic acid, (5Z,8Z,11Z,14Z)-eicosatetraenedioate. Also catalyzes the reduction of benzoquinones. The polypeptide is All-trans-retinol dehydrogenase [NAD(+)] ADH4 (Homo sapiens (Human)).